Consider the following 350-residue polypeptide: D-guloside 3-dehydrogenase (350 aa).

This sequence belongs to the zinc-containing alcohol dehydrogenase family. It depends on Zn(2+) as a cofactor.

The enzyme catalyses a D-guloside + NAD(+) = a 3-dehydro-D-guloside + NADH + H(+). Functionally, catalyzes the NAD(+)-dependent oxidation of the hydroxyl group at C3 of D-gulosides leading to 3-dehydro-D-gulosides. Probably functions in a metabolic pathway that transforms D-gulosides to D-glucosides. Is also able to catalyze the reverse reactions, i.e. the NADH-dependent reduction of the oxo group at C3 of 3-dehydro-D-gulosides leading to D-gulosides. In vitro, can oxidize D-gulose and methyl beta-D-guloside, and reduce methyl alpha-3-dehydro-D-guloside and methyl beta-3-dehydro-D-guloside. However, the actual specific physiological substrates for this metabolic pathway are unknown. The polypeptide is D-guloside 3-dehydrogenase (ycjQ) (Escherichia coli (strain K12)).